The following is a 637-amino-acid chain: Sodium-dependent proline transporter (637 aa).

The Cytoplasmic segment spans residues 1–45 (MKKLQEAHLRKPVTPDLLMTPSDQGDVDLDVDFAADRGNWTGKLD). The residue at position 20 (Thr20) is a Phosphothreonine. Ser22 carries the post-translational modification Phosphoserine. 3 helical membrane passes run 46 to 66 (FLLSCIGYCVGLGNVWRFPYR), 74 to 93 (AFLVPYFLMLAICGIPLFFL), and 117 to 137 (GAGAAMLLIVGLVAIYYNMII). Over 138-214 (AYVLFYLFAS…QGIGRPGEIR (77 aa)) the chain is Extracellular. A glycan (N-linked (GlcNAc...) asparagine) is linked at Asn182. 9 helical membrane passes run 215 to 233 (WNLCLCLLLAWVIVFLCIL), 242 to 259 (VVYFTATFPYLILLMLLV), 295 to 312 (IFYSLGVGFGGLLTFASY), 324 to 345 (FIVTLGNAITSILAGFAIFSVL), 378 to 397 (LPLSPFWSFLFFFMLLTLGL), 425 to 443 (VFSGLICVAMYLMGLILTT), 459 to 479 (SFGLMVVVITTCLAVTRVYGI), 500 to 519 (ACWLFLSPATLLALLVYSIV), and 538 to 556 (LGILMGLLSCLMIPAGMLV). Topologically, residues 557–637 (AVLREEGSLW…IAEEEEESMM (81 aa)) are cytoplasmic. Phosphoserine is present on residues Ser573 and Ser582. Thr588 is subject to Phosphothreonine. Position 591 is a phosphotyrosine (Tyr591). A phosphoserine mark is found at Ser598 and Ser600.

It belongs to the sodium:neurotransmitter symporter (SNF) (TC 2.A.22) family. SLC6A7 subfamily. In terms of tissue distribution, expressed in subpopulations of putative glutamatergic pathways of rat brain.

It is found in the synaptic cell membrane. It carries out the reaction L-proline(out) + chloride(out) + 2 Na(+)(out) = L-proline(in) + chloride(in) + 2 Na(+)(in). The catalysed reaction is L-pipecolate(out) + chloride(out) + 2 Na(+)(out) = L-pipecolate(in) + chloride(in) + 2 Na(+)(in). Functionally, brain specific sodium (and chloride)-dependent proline transporter. Terminates the action of proline by its high affinity sodium-dependent reuptake into presynaptic terminals. The protein is Sodium-dependent proline transporter (Slc6a7) of Rattus norvegicus (Rat).